Here is a 4092-residue protein sequence, read N- to C-terminus: Dynein heavy chain, cytoplasmic (4092 aa).

Positions 1–1757 (MCKNEARLAN…FISQSGYLLQ (1757 aa)) are stem. 6 coiled-coil regions span residues 154 to 175 (VETI…QQLH), 486 to 508 (KLEQ…LQNT), 542 to 566 (KVLE…TGLE), 932 to 959 (VIKL…YVKE), 1042 to 1063 (YERD…VEDM), and 1681 to 1705 (KGLL…LVEY). AAA regions lie at residues 1758 to 1979 (YKFE…VLRN), 2036 to 2273 (QCLK…NDLV), 2379 to 2628 (SLEA…LVRG), and 2722 to 2984 (TFCD…KVGV). Residues 1796–1803 (GPAGTGKT), 2074–2081 (GKAGCGKT), 2418–2425 (GPPGSGKT), and 2760–2767 (GASRTGKT) each bind ATP. Coiled coils occupy residues 2993–3092 (IDGL…KRKE), 3242–3300 (KTKA…KSLT), and 3532–3608 (ITLT…EEFF). The interval 2993-3300 (IDGLRALVKL…RSISLVKSLT (308 aa)) is stalk. AAA stretches follow at residues 3370-3599 (LVTL…NIEK) and 3760-3970 (LNWF…YLEN).

Belongs to the dynein heavy chain family. In terms of assembly, the dynein complex consists of at least two heavy chains and a number of intermediate and light chains. Interacts with DYN3.

It localises to the cytoplasm. The protein localises to the cytoskeleton. Functionally, cytoplasmic dynein acts as a motor for the intracellular retrograde motility of vesicles and organelles along microtubules. Dynein has ATPase activity; the force-producing power stroke is thought to occur on release of ADP. Required to maintain uniform nuclear distribution in hyphae. May play an important role in the proper orientation of the mitotic spindle into the budding daughter cell yeast. Probably required for normal progression of the cell cycle. This Saccharomyces cerevisiae (strain ATCC 204508 / S288c) (Baker's yeast) protein is Dynein heavy chain, cytoplasmic (DYN1).